The sequence spans 377 residues: tRNA(Met) cytidine acetate ligase (377 aa).

ATP is bound by residues Ile7 to His20, Gly100, Asn153, and Arg178.

The protein belongs to the TmcAL family.

It localises to the cytoplasm. The enzyme catalyses cytidine(34) in elongator tRNA(Met) + acetate + ATP = N(4)-acetylcytidine(34) in elongator tRNA(Met) + AMP + diphosphate. Functionally, catalyzes the formation of N(4)-acetylcytidine (ac(4)C) at the wobble position of elongator tRNA(Met), using acetate and ATP as substrates. First activates an acetate ion to form acetyladenylate (Ac-AMP) and then transfers the acetyl group to tRNA to form ac(4)C34. The polypeptide is tRNA(Met) cytidine acetate ligase (Staphylococcus epidermidis (strain ATCC 35984 / DSM 28319 / BCRC 17069 / CCUG 31568 / BM 3577 / RP62A)).